The following is a 191-amino-acid chain: Classical arabinogalactan protein 9 (191 aa).

Positions 1–20 (MARSFAIAVICIVLIAGVTG) are cleaved as a signal peptide. A disordered region spans residues 20–172 (GQAPTSPPTA…SPTDVNDQNG (153 aa)). Pyrrolidone carboxylic acid is present on Gln21. A 4-hydroxyproline mark is found at Pro23, Pro26, Pro27, Pro31, and Pro33. Over residues 24-146 (TSPPTATPAP…PSPSSSPPLP (123 aa)) the composition is skewed to pro residues. Residues Pro26, Pro27, Pro31, and Pro33 are each glycosylated (O-linked (Ara...) hydroxyproline). The segment covering 155 to 172 (TDSISPAPSPTDVNDQNG) has biased composition (polar residues). The GPI-anchor amidated glycine moiety is linked to residue Gly172. Positions 173–191 (ASKMVSSLVFGSVLVWFMI) are cleaved as a propeptide — removed in mature form.

The protein belongs to the classical AGP family. In terms of processing, O-glycosylated on hydroxyprolines; noncontiguous hydroxylproline residues are glycosylated with arabinogalactan. In terms of tissue distribution, predominantly expressed in flowers and at a lower level in leaves and siliques.

The protein localises to the cell membrane. Its function is as follows. Proteoglycan that seems to be implicated in diverse developmental roles such as differentiation, cell-cell recognition, embryogenesis and programmed cell death. This Arabidopsis thaliana (Mouse-ear cress) protein is Classical arabinogalactan protein 9 (AGP9).